The sequence spans 464 residues: tRNA-2-methylthio-N(6)-dimethylallyladenosine synthase (464 aa).

Residues 1–25 are disordered; that stretch reads MSDLVPLSRKPAPAAGDPAPSPAAP. An MTTase N-terminal domain is found at 27 to 142; that stretch reads RKVYVHTFGC…LPEMVERARG (116 aa). Positions 36, 72, 105, 180, 184, and 187 each coordinate [4Fe-4S] cluster. Residues 166-398 form the Radical SAM core domain; that stretch reads ARGRATAFVT…LAAQRRIAGE (233 aa). The TRAM domain occupies 401–464; it reads AAELGKVVEV…GGSSLSGTLA (64 aa).

Belongs to the methylthiotransferase family. MiaB subfamily. As to quaternary structure, monomer. It depends on [4Fe-4S] cluster as a cofactor.

It is found in the cytoplasm. The enzyme catalyses N(6)-dimethylallyladenosine(37) in tRNA + (sulfur carrier)-SH + AH2 + 2 S-adenosyl-L-methionine = 2-methylsulfanyl-N(6)-dimethylallyladenosine(37) in tRNA + (sulfur carrier)-H + 5'-deoxyadenosine + L-methionine + A + S-adenosyl-L-homocysteine + 2 H(+). Its function is as follows. Catalyzes the methylthiolation of N6-(dimethylallyl)adenosine (i(6)A), leading to the formation of 2-methylthio-N6-(dimethylallyl)adenosine (ms(2)i(6)A) at position 37 in tRNAs that read codons beginning with uridine. The protein is tRNA-2-methylthio-N(6)-dimethylallyladenosine synthase of Anaeromyxobacter dehalogenans (strain 2CP-C).